A 291-amino-acid chain; its full sequence is BTB/POZ domain-containing protein 19 (291 aa).

The BTB domain occupies 29 to 98; that stretch reads SDVCFVVGQE…LYTNSVKLYR (70 aa). One can recognise a BACK domain in the interval 134 to 234; sequence CEALQVAVTF…LALLAPAELS (101 aa).

In Homo sapiens (Human), this protein is BTB/POZ domain-containing protein 19 (BTBD19).